The following is a 459-amino-acid chain: MDASTPLPPASSSPRCNPAPQTIHIEFPHHSSSLLESLNRHRLEGKFCDVSLLVQGRELRAHKAVLAAASPYFHDKLLLGDAPRLTLPNVIEADAFEGLLQLIYSGSLHLPLDALPAHLLVASGLQMWQVVDRCSEILRELETSGGISAGGRASSLTLISTTSSGGWCIRSSPFQNPVRSSASTENSVLPESPAGGEGSELEGMLQIQVKVEEEEEQGSAAPLFQTPQPERVSGGVSQACGSHPLPTPALPSKPSEDESSTVDPPAPPVQASQILYVNQENVECKEEIARGTKEKTKVLSGEDSEEKEELRYLLSSGGGESSGAGDPSWKPVDLHGNEILSGDGGPGGTGQAMHGPVKLGGTPPADGKCFACLCGKRFAVKPKRDRHIMLTFSLRPFGCGICNKRFKLKHHLTEHMKTHARALHACPHCGRRFRVQAFFLRHRDLCKGQGWPTYHWTYK.

The BTB domain occupies 48-112 (CDVSLLVQGR…IYSGSLHLPL (65 aa)). Positions 178–189 (VRSSASTENSVL) are enriched in polar residues. Disordered stretches follow at residues 178–200 (VRSSASTENSVLPESPAGGEGSE) and 212–274 (EEEE…ASQI). Glycyl lysine isopeptide (Lys-Gly) (interchain with G-Cter in SUMO2) cross-links involve residues K285, K293, and K368. The disordered stretch occupies residues 293–356 (KEKTKVLSGE…GGTGQAMHGP (64 aa)). A C2H2-type 1 zinc finger spans residues 397–419 (FGCGICNKRFKLKHHLTEHMKTH). The C2H2-type 2; atypical zinc finger occupies 424–446 (HACPHCGRRFRVQAFFLRHRDLC).

The protein localises to the nucleus. May be involved in transcriptional regulation. This Mus musculus (Mouse) protein is Zinc finger and BTB domain-containing protein 9 (Zbtb9).